The chain runs to 460 residues: tRNA modification GTPase MnmE (460 aa).

(6S)-5-formyl-5,6,7,8-tetrahydrofolate contacts are provided by Arg29, Glu89, and Arg128. A TrmE-type G domain is found at 224–382; it reads GVPTVIIGKP…LKQNLLEIIQ (159 aa). A K(+)-binding site is contributed by Asn234. Residues 234-239, 253-259, and 278-281 each bind GTP; these read NAGKST, SEIAGTT, and DTAG. Ser238 contacts Mg(2+). K(+) contacts are provided by Ser253, Ile255, and Thr258. A Mg(2+)-binding site is contributed by Thr259. Lys460 contacts (6S)-5-formyl-5,6,7,8-tetrahydrofolate.

This sequence belongs to the TRAFAC class TrmE-Era-EngA-EngB-Septin-like GTPase superfamily. TrmE GTPase family. As to quaternary structure, homodimer. Heterotetramer of two MnmE and two MnmG subunits. Requires K(+) as cofactor.

It is found in the cytoplasm. In terms of biological role, exhibits a very high intrinsic GTPase hydrolysis rate. Involved in the addition of a carboxymethylaminomethyl (cmnm) group at the wobble position (U34) of certain tRNAs, forming tRNA-cmnm(5)s(2)U34. In Cytophaga hutchinsonii (strain ATCC 33406 / DSM 1761 / CIP 103989 / NBRC 15051 / NCIMB 9469 / D465), this protein is tRNA modification GTPase MnmE.